A 243-amino-acid chain; its full sequence is Venom nerve growth factor 1 (243 aa).

The signal sequence occupies residues 1-18 (MSMLCYTLIIAFLIGIWA). Positions 19-125 (APKSEDNVPL…TLNRNIRAKR (107 aa)) are excised as a propeptide. A compositionally biased stretch (basic and acidic residues) spans 47-66 (GLKTSRNTDQRHPAPKKAED). Positions 47–69 (GLKTSRNTDQRHPAPKKAEDQEL) are disordered. Disulfide bonds link C139/C204, C182/C232, and C192/C234. N-linked (GlcNAc...) asparagine glycosylation is present at N148.

This sequence belongs to the NGF-beta family. In terms of assembly, homodimer; non-covalently linked. Expressed by the venom gland.

The protein resides in the secreted. Nerve growth factor is important for the development and maintenance of the sympathetic and sensory nervous systems. It stimulates division and differentiation of sympathetic and embryonic sensory neurons as well as basal forebrain cholinergic neurons in the brain. Its relevance in the snake venom is not clear. However, it has been shown to inhibit metalloproteinase-dependent proteolysis of platelet glycoprotein Ib alpha, suggesting a metalloproteinase inhibition to prevent metalloprotease autodigestion and/or protection against prey proteases. Binds a lipid between the two protein chains in the homodimer. The lipid-bound form promotes histamine relase from mouse mast cells, contrary to the lipid-free form. In Pseudonaja textilis (Eastern brown snake), this protein is Venom nerve growth factor 1.